A 392-amino-acid chain; its full sequence is Acyl-CoA dehydrogenase IpdE1 (392 aa).

FAD is bound by residues 126–129 and Ser171; that span reads QGYS. The active-site Proton acceptor is Glu254. 371–373 lines the FAD pocket; that stretch reads SNE.

It belongs to the acyl-CoA dehydrogenase family. Heterotetramer composed of 2 IpdE1 subunits and 2 IpdE2 subunits. Requires FAD as cofactor.

The enzyme catalyses 3-[(3aS,4S,5R,7aS)-5-hydroxy-7a-methyl-1-oxo-octahydro-1H-inden-4-yl]propanoyl-CoA + A = (2E)-3-[(3aS,4S,5R,7aS)-5-hydroxy-7a-methyl-1-oxo-octahydro-1H-inden-4-yl]prop-2-enoyl-CoA + AH2. It participates in steroid metabolism; cholesterol degradation. Its function is as follows. Involved in cholesterol degradation. Catalyzes the dehydrogenation of 5OH-HIP-CoA to 5OH-HIPE-CoA. The sequence is that of Acyl-CoA dehydrogenase IpdE1 from Mycolicibacterium smegmatis (strain ATCC 700084 / mc(2)155) (Mycobacterium smegmatis).